A 130-amino-acid chain; its full sequence is Small ribosomal subunit protein uS9 (130 aa).

It belongs to the universal ribosomal protein uS9 family.

This is Small ribosomal subunit protein uS9 from Ectopseudomonas mendocina (strain ymp) (Pseudomonas mendocina).